A 374-amino-acid chain; its full sequence is Proteasomal ubiquitin receptor ADRM1 homolog (374 aa).

One can recognise a Pru domain in the interval 13 to 131 (SSSGHIVEFK…KKVTDALNKP (119 aa)). Disordered regions lie at residues 126–166 (DALN…MNAP), 187–223 (SDTL…NPLS), and 334–374 (ANLT…MDVD). Composition is skewed to polar residues over residues 141-163 (SAGS…SSDM) and 209-223 (PSTN…NPLS). The region spanning 239-346 (SQKKEVAVSL…TKAEGGEDAA (108 aa)) is the DEUBAD domain. Basic and acidic residues predominate over residues 354-368 (DATREPEPKRNRPDN).

This sequence belongs to the ADRM1 family. Component of the 19S proteasome regulatory particle complex. The 26S proteasome consists of a 20S core particle (CP) and two 19S regulatory subunits (RP). Interacts with deubiquitinase ubh-4.

The protein resides in the cytoplasm. It is found in the nucleus. Its function is as follows. May function as a proteasomal ubiquitin receptor. May promote the deubiquitinating activity associated with the 26S proteasome. The protein is Proteasomal ubiquitin receptor ADRM1 homolog of Caenorhabditis elegans.